A 261-amino-acid chain; its full sequence is Follistatin-related protein 3 (261 aa).

A signal peptide spans 1-26 (MRPRAPGPLWPLPWGALAWAVGFVGS). Positions 36-107 (GVCWLQQGRE…SCEGVECGPG (72 aa)) constitute a TB domain. 8 disulfides stabilise this stretch: Cys-38–Cys-61, Cys-48–Cys-92, Cys-62–Cys-95, Cys-99–Cys-110, Cys-104–Cys-119, Cys-121–Cys-153, Cys-125–Cys-146, and Cys-135–Cys-167. A glycan (N-linked (GlcNAc...) asparagine) is linked at Asn-73. Positions 99-119 (CEGVECGPGKACRMLGGRPRC) constitute a Follistatin-like 1 domain. Kazal-like domains are found at residues 113-169 (LGGR…RCRK) and 189-245 (SAHC…SCAG). The region spanning 170–193 (SCAHVVCLRPQSCVVDQTGSAHCV) is the Follistatin-like 2 domain. 3 cysteine pairs are disulfide-bonded: Cys-195–Cys-229, Cys-200–Cys-222, and Cys-211–Cys-243. Asn-215 carries N-linked (GlcNAc...) asparagine glycosylation. The interval 242-261 (SCAGTPEPLDPESEEEENFV) is disordered. Over residues 250–261 (LDPESEEEENFV) the composition is skewed to acidic residues.

As to quaternary structure, interacts with INHBA and INHBB. Interacts with FN1. Interacts with ADAM12. Interacts with MLLT10; the interaction enhances MLLT10 in vitro transcriptional activity and self-association. Interacts with MSTN.

It is found in the secreted. The protein resides in the nucleus. In terms of biological role, the secreted form is a binding and antagonizing protein for members of the TGF-beta family, such as activin, BMP2 and MSTN. Inhibits activin A-, activin B-, BMP2- and MSDT-induced cellular signaling; more effective on activin A than on activin B. Involved in bone formation; inhibits osteoclast differentiation. Involved in hematopoiesis; involved in differentiation of hemopoietic progenitor cells, increases hematopoietic cell adhesion to fibronectin and seems to contribute to the adhesion of hematopoietic precursor cells to the bone marrow stroma. The nuclear form is probably involved in transcriptional regulation via interaction with MLLT10. In Bos taurus (Bovine), this protein is Follistatin-related protein 3 (FSTL3).